Reading from the N-terminus, the 258-residue chain is Acidic leucine-rich nuclear phosphoprotein 32 family member E (258 aa).

An N-acetylmethionine modification is found at Met1. LRR repeat units follow at residues Glu18–Asn38, Glu43–Asn64, Lys65–Cys87, and Asn89–Gln110. Lys68 is covalently cross-linked (Glycyl lysine isopeptide (Lys-Gly) (interchain with G-Cter in SUMO2)). Residues Cys123 to Glu161 form the LRRCT domain. Composition is skewed to acidic residues over residues Asp149 to Val206 and Ile216 to Glu238. Positions Asp149–Asp258 are disordered. Residues Glu205–Asp258 are ZID domain. A compositionally biased stretch (basic and acidic residues) spans Gly239–Ala249.

Belongs to the ANP32 family. As to quaternary structure, component of a SWR1-like complex, composed of EP400, KAT5/TIP60, TRRAP, BRD8, RUVBL1, RUVBL2, ING3 and ANP32E; the complex does not contain SRCAP. Interacts with H2A.Z/H2AZ1. Interacts with the importin alpha KPNA1 and KPNA2. In terms of processing, phosphorylated. The phosphorylation is nuclear localization signal (NLS)-dependent.

It localises to the cytoplasm. The protein localises to the nucleus. Histone chaperone that specifically mediates the genome-wide removal of histone H2A.Z/H2AZ1 from the nucleosome: removes H2A.Z/H2AZ1 from its normal sites of deposition, especially from enhancer and insulator regions. Not involved in deposition of H2A.Z/H2AZ1 in the nucleosome. May stabilize the evicted H2A.Z/H2AZ1-H2B dimer, thus shifting the equilibrium towards dissociation and the off-chromatin state. Inhibits activity of protein phosphatase 2A (PP2A). Does not inhibit protein phosphatase 1. May play a role in cerebellar development and synaptogenesis. This Rattus norvegicus (Rat) protein is Acidic leucine-rich nuclear phosphoprotein 32 family member E (Anp32e).